The following is a 372-amino-acid chain: MHC class I-like protein MILL2 (372 aa).

An N-terminal signal peptide occupies residues 1–26 (MEASSGTAGPAVLLLILALLLTESQG). The tract at residues 28 to 119 (RSQGTHTLRY…MINQKGHDKG (92 aa)) is alpha-1. Intrachain disulfides connect C78/C89, C129/C191, and C230/C287. The interval 120–210 (PYTLQATLDC…SLSNVLPDTG (91 aa)) is alpha-2. N-linked (GlcNAc...) asparagine glycans are attached at residues N134, N234, and N293. The 111-residue stretch at 192–302 (PARLQRHLAS…NRTIMQTAVS (111 aa)) folds into the Ig-like C1-type domain. The segment at 211-339 (SPVVIVTCRN…VVDGGLVTGN (129 aa)) is alpha-3. Residues 308–349 (WPSASWATRQEAEGPHRTHNDHVVDGGLVTGNANKDSPDASS) form a disordered region. Positions 317–331 (QEAEGPHRTHNDHVV) are enriched in basic and acidic residues. The tract at residues 340–348 (ANKDSPDAS) is connecting peptide. The GPI-anchor amidated serine moiety is linked to residue S349. Residues 350-372 (CATASAISAFPVVVLSVALPRAN) constitute a propeptide, removed in mature form.

This sequence belongs to the MHC class I family. In terms of assembly, heterodimer with B2M. Ubiquitously expressed in neonatal and adult tissues.

The protein resides in the cell membrane. Its function is as follows. Binds to heparan sulfate proteoglycans on the surface of fibroblast cells. The protein is MHC class I-like protein MILL2 of Rattus norvegicus (Rat).